The following is a 482-amino-acid chain: D-inositol 3-phosphate glycosyltransferase (482 aa).

Position 63 (His-63) interacts with 1D-myo-inositol 3-phosphate. UDP-N-acetyl-alpha-D-glucosamine contacts are provided by residues Gln-69 to Pro-70 and Gly-77. 1D-myo-inositol 3-phosphate-binding positions include Asp-74–Asn-79, Lys-132, Tyr-165, Thr-189, and Arg-209. Residues Arg-289, Lys-294, and Gln-355 each coordinate UDP-N-acetyl-alpha-D-glucosamine. Positions 364, 365, and 367 each coordinate Mg(2+). Residues Glu-377 and Glu-385 each contribute to the UDP-N-acetyl-alpha-D-glucosamine site. Mg(2+) is bound at residue Thr-391.

The protein belongs to the glycosyltransferase group 1 family. MshA subfamily. In terms of assembly, homodimer.

It carries out the reaction 1D-myo-inositol 3-phosphate + UDP-N-acetyl-alpha-D-glucosamine = 1D-myo-inositol 2-acetamido-2-deoxy-alpha-D-glucopyranoside 3-phosphate + UDP + H(+). Its function is as follows. Catalyzes the transfer of a N-acetyl-glucosamine moiety to 1D-myo-inositol 3-phosphate to produce 1D-myo-inositol 2-acetamido-2-deoxy-glucopyranoside 3-phosphate in the mycothiol biosynthesis pathway. The sequence is that of D-inositol 3-phosphate glycosyltransferase from Salinispora tropica (strain ATCC BAA-916 / DSM 44818 / JCM 13857 / NBRC 105044 / CNB-440).